A 327-amino-acid polypeptide reads, in one-letter code: Glycerol-3-phosphate dehydrogenase [NAD(P)+] (327 aa).

NADPH contacts are provided by S10, F11, R31, and K108. Positions 108, 136, and 138 each coordinate sn-glycerol 3-phosphate. Residue A140 coordinates NADPH. Sn-glycerol 3-phosphate-binding residues include K191, D246, S256, R257, and N258. K191 serves as the catalytic Proton acceptor. Residue R257 coordinates NADPH. Residues L281 and E283 each coordinate NADPH.

Belongs to the NAD-dependent glycerol-3-phosphate dehydrogenase family.

The protein resides in the cytoplasm. The enzyme catalyses sn-glycerol 3-phosphate + NAD(+) = dihydroxyacetone phosphate + NADH + H(+). It carries out the reaction sn-glycerol 3-phosphate + NADP(+) = dihydroxyacetone phosphate + NADPH + H(+). It functions in the pathway membrane lipid metabolism; glycerophospholipid metabolism. Its function is as follows. Catalyzes the reduction of the glycolytic intermediate dihydroxyacetone phosphate (DHAP) to sn-glycerol 3-phosphate (G3P), the key precursor for phospholipid synthesis. The sequence is that of Glycerol-3-phosphate dehydrogenase [NAD(P)+] from Ehrlichia ruminantium (strain Welgevonden).